Here is a 393-residue protein sequence, read N- to C-terminus: Elongation factor Tu (393 aa).

The 194-residue stretch at lysine 10–valine 203 folds into the tr-type G domain. The interval glycine 19–threonine 26 is G1. Glycine 19–threonine 26 serves as a coordination point for GTP. Threonine 26 is a Mg(2+) binding site. The interval glycine 60–serine 64 is G2. The tract at residues aspartate 81–glycine 84 is G3. GTP contacts are provided by residues aspartate 81–histidine 85 and asparagine 136–aspartate 139. The tract at residues asparagine 136–aspartate 139 is G4. Positions serine 173–leucine 175 are G5.

It belongs to the TRAFAC class translation factor GTPase superfamily. Classic translation factor GTPase family. EF-Tu/EF-1A subfamily. Monomer.

The protein localises to the cytoplasm. The catalysed reaction is GTP + H2O = GDP + phosphate + H(+). Functionally, GTP hydrolase that promotes the GTP-dependent binding of aminoacyl-tRNA to the A-site of ribosomes during protein biosynthesis. The sequence is that of Elongation factor Tu from Chlorobium phaeobacteroides (strain BS1).